Here is a 248-residue protein sequence, read N- to C-terminus: ATP synthase subunit a, chloroplastic (248 aa).

The next 5 helical transmembrane spans lie at 38–58 (QVLL…TIAV), 96–116 (VPFI…GALL), 135–155 (INTT…AGLT), 200–220 (LVVA…VMFL), and 221–241 (GLFT…AYIG).

The protein belongs to the ATPase A chain family. In terms of assembly, F-type ATPases have 2 components, CF(1) - the catalytic core - and CF(0) - the membrane proton channel. CF(1) has five subunits: alpha(3), beta(3), gamma(1), delta(1), epsilon(1). CF(0) has four main subunits: a, b, b' and c.

It localises to the plastid. The protein resides in the chloroplast thylakoid membrane. In terms of biological role, key component of the proton channel; it plays a direct role in the translocation of protons across the membrane. This chain is ATP synthase subunit a, chloroplastic, found in Pinus thunbergii (Japanese black pine).